Here is a 313-residue protein sequence, read N- to C-terminus: Intelectin-1b (313 aa).

The first 19 residues, 1-19, serve as a signal peptide directing secretion; the sequence is MTQLGFLLFIMIATRVCSA. Positions 32–251 constitute a Fibrinogen C-terminal domain; that stretch reads SFFSSLPRSC…NNERAASALC (220 aa). Cysteines 41 and 70 form a disulfide. 7 residues coordinate Ca(2+): H86, E87, N89, G92, G97, D98, and D133. Cystine bridges form between C94/C280, C199/C259, and C251/C265. The N-linked (GlcNAc...) asparagine glycan is linked to N163. Residues N260, E262, E274, and D282 each contribute to the Ca(2+) site. Residues 262 to 263 and E274 each bind a carbohydrate; that span reads EH. A lipid anchor (GPI-anchor amidated serine) is attached at S298. The propeptide occupies 299–313; it reads NSREITEAAVLLFYR.

In terms of tissue distribution, expressed in the globlet and Paneth cells of the small intestine of infected mice. Expressed in the ileum of uninfected mice.

The protein localises to the cell membrane. The protein resides in the secreted. Its function is as follows. May play a protective role in the innate immune response to parasite infection. The protein is Intelectin-1b (Itln1b) of Mus musculus (Mouse).